The chain runs to 150 residues: MPEFQLQRRLAADIAGVGLNNIKFNPERLEEVEEALTREDIKKLIKERAVIVNPKRGISSGRLKERKHKRRSKGEGRKHGSRKGKSGARTGDKEIWINKIRKIRRYIRWLRDNNVIDKHTYRLLYKRAKGNYFKNLSDVKSYLRQMGHKV.

The interval 56-90 is disordered; sequence RGISSGRLKERKHKRRSKGEGRKHGSRKGKSGART.

It belongs to the eukaryotic ribosomal protein eL19 family. As to quaternary structure, part of the 50S ribosomal subunit.

Its function is as follows. Binds to the 23S rRNA. The sequence is that of Large ribosomal subunit protein eL19 from Sulfolobus acidocaldarius (strain ATCC 33909 / DSM 639 / JCM 8929 / NBRC 15157 / NCIMB 11770).